The sequence spans 338 residues: Trans-enoyl reductase fsr4 (338 aa).

Position 65 to 68 (65 to 68 (KDWK)) interacts with NADP(+). 147–153 (AAFTAAC) provides a ligand contact to substrate. Residues 182–185 (SSAV), 205–208 (AGRA), tyrosine 227, and 277–278 (II) each bind NADP(+).

This sequence belongs to the zinc-containing alcohol dehydrogenase family.

Trans-enoyl reductase; part of the gene cluster that mediates the biosynthesis of fusarubins, highly pigmented naphthoquinones responsible for the coloration of the fruiting bodies. The non-reducing polyketide synthase FSR1 is responsible for the condensation of seven acetyl-CoA units to yield a haptaketide. After rings A and B are formed by aldol-type cyclization, the PKS-derived product is released as 6-O-demethylfusarubinaldehyde. Then, two hydroxyl groups at C-5 and C-10 are incorporated by FSR3, and simultaneously hydroxyl groups at C-6 and C-8 are methylated by FSR2. The aldehyde is, on the one hand, reduced by FSR3 to 8-O-methylfusarubin alcohol, which equilibrates mainly with 8-O-methylfusarubin and only small amounts of 8-O-methylnectriafurone. On the other hand, the aldehyde can be oxidized to form 8-O-methylfusarubinic acid, a reaction driven by FSR3 equilibrating with 8-O-methylfusarubinlactone, finally resulting in 8-O-methylanhydrofusarubinlactol after a further reduction step and loss of water. 8-O-Methylfusarubinic acid can also undergo decarboxylation, resulting in 8-O-methyl-13-hydroxynorjavanicin after another hydroxylation step at C-13. Both steps are most likely also accomplished by FSR3. No enzymatic function has been determined so far for either FSR4 and FSR5. Their deletion does not alter the product spectrum, but the possibility that they catalyze specific enzymatic steps during perithecium development cannot be ruled out. FSR4 might possess a regulatory function in the biosynthesis of fusarubins. The protein is Trans-enoyl reductase fsr4 of Gibberella fujikuroi (strain CBS 195.34 / IMI 58289 / NRRL A-6831) (Bakanae and foot rot disease fungus).